The primary structure comprises 591 residues: Cytidine monophosphate-N-acetylneuraminic acid hydroxylase (591 aa).

A Rieske domain is found at 12–110 (LEAEDVRNLK…AVLSETDGSL (99 aa)). Residues cysteine 52, histidine 54, cysteine 73, and histidine 76 each contribute to the [2Fe-2S] cluster site.

This sequence belongs to the CMP-Neu5Ac hydroxylase family. Requires [2Fe-2S] cluster as cofactor.

It localises to the cytoplasm. It catalyses the reaction CMP-N-acetyl-beta-neuraminate + 2 Fe(II)-[cytochrome b5] + O2 + 2 H(+) = CMP-N-glycoloyl-beta-neuraminate + 2 Fe(III)-[cytochrome b5] + H2O. Its pathway is amino-sugar metabolism; N-acetylneuraminate metabolism. Its function is as follows. Sialic acids are components of carbohydrate chains of glycoconjugates and are involved in cell-cell recognition and cell-pathogen interactions. Catalyzes the conversion of CMP-N-acetylneuraminic acid (CMP-Neu5Ac) into its hydroxylated derivative CMP-N-glycolylneuraminic acid (CMP-Neu5Gc), a sialic acid abundantly expressed at the surface of many cells. The protein is Cytidine monophosphate-N-acetylneuraminic acid hydroxylase (cmah) of Danio rerio (Zebrafish).